The chain runs to 31 residues: Kalata-B9 (31 aa).

Residues 1–31 constitute a cross-link (cyclopeptide (Gly-Asp)); sequence GSVFNCGETCVLGTCYTPGCTCNTYRVCTKD. 3 cysteine pairs are disulfide-bonded: Cys-6/Cys-20, Cys-10/Cys-22, and Cys-15/Cys-28.

The protein belongs to the cyclotide family. Bracelet subfamily. In terms of processing, this peptide occurs in both cyclic and linear forms.

In terms of biological role, probably participates in a plant defense mechanism. This is Kalata-B9 from Oldenlandia affinis.